Consider the following 710-residue polypeptide: Polyribonucleotide nucleotidyltransferase (710 aa).

Mg(2+) contacts are provided by D491 and D497. The KH domain occupies 559–618 (PRLITIKINPEKIRDVIGKGGAVIRALTEETGTQIDISDEGVVTIASVDAAAGQEAKRRI). Residues 628–696 (GKVYEGTVLK…DRGRLKLSMK (69 aa)) form the S1 motif domain.

It belongs to the polyribonucleotide nucleotidyltransferase family. It depends on Mg(2+) as a cofactor.

The protein resides in the cytoplasm. The catalysed reaction is RNA(n+1) + phosphate = RNA(n) + a ribonucleoside 5'-diphosphate. Involved in mRNA degradation. Catalyzes the phosphorolysis of single-stranded polyribonucleotides processively in the 3'- to 5'-direction. This is Polyribonucleotide nucleotidyltransferase from Herminiimonas arsenicoxydans.